We begin with the raw amino-acid sequence, 564 residues long: Efflux pump DEP3 (564 aa).

The span at Met-1–Arg-12 shows a compositional bias: polar residues. Residues Met-1–Pro-48 form a disordered region. A compositionally biased stretch (basic and acidic residues) spans Pro-29–Gly-38. A run of 14 helical transmembrane segments spans residues Ser-65–Ile-85, Leu-91–Trp-111, Trp-122–Pro-142, Val-152–Leu-172, Ser-185–Ala-205, Trp-212–Phe-232, Ala-255–Val-275, Gly-281–Leu-301, Phe-332–Ile-352, Val-362–Met-382, Gly-386–Met-406, Ile-423–Leu-443, Ala-452–Gly-472, and Thr-528–Leu-548.

The protein belongs to the major facilitator superfamily. TCR/Tet family.

The protein resides in the cell membrane. Functionally, efflux pump; part of the gene cluster that mediates the biosynthesis of depudecin, a highly oxidized eleven-carbon linear polyketide that acts as a histone deacetylase (HDAC) inhibitor and makes a small contribution to pathogenesis. Is presumed either to be responsible for exporting depudecin, to provide self-protection, or both. The protein is Efflux pump DEP3 of Alternaria brassicicola (Dark leaf spot agent).